The following is a 354-amino-acid chain: GTPase Obg (354 aa).

In terms of domain architecture, Obg spans 1–159 (MKFLDQCKIY…RWIWLRLKLI (159 aa)). The 169-residue stretch at 160 to 328 (ADVGLVGLPN…LLRAAYKQVR (169 aa)) folds into the OBG-type G domain. Residues 166–173 (GLPNAGKS), 191–195 (FTTLT), 213–216 (DIPG), 280–283 (NKID), and 309–311 (SGV) contribute to the GTP site. Residues serine 173 and threonine 193 each coordinate Mg(2+). Residues 335 to 345 (EEEIDDDEDHV) are compositionally biased toward acidic residues. The tract at residues 335–354 (EEEIDDDEDHVDETPGGWTP) is disordered.

This sequence belongs to the TRAFAC class OBG-HflX-like GTPase superfamily. OBG GTPase family. As to quaternary structure, monomer. The cofactor is Mg(2+).

The protein resides in the cytoplasm. An essential GTPase which binds GTP, GDP and possibly (p)ppGpp with moderate affinity, with high nucleotide exchange rates and a fairly low GTP hydrolysis rate. Plays a role in control of the cell cycle, stress response, ribosome biogenesis and in those bacteria that undergo differentiation, in morphogenesis control. The chain is GTPase Obg from Caulobacter vibrioides (strain ATCC 19089 / CIP 103742 / CB 15) (Caulobacter crescentus).